A 150-amino-acid chain; its full sequence is UPF0178 protein Rru_A0086 (150 aa).

It belongs to the UPF0178 family.

This chain is UPF0178 protein Rru_A0086, found in Rhodospirillum rubrum (strain ATCC 11170 / ATH 1.1.1 / DSM 467 / LMG 4362 / NCIMB 8255 / S1).